The primary structure comprises 344 residues: tRNA(Ile)-lysidine synthase (344 aa).

ATP is bound at residue S30–S35. A disordered region spans residues P323–Y344.

The protein belongs to the tRNA(Ile)-lysidine synthase family.

Its subcellular location is the cytoplasm. It catalyses the reaction cytidine(34) in tRNA(Ile2) + L-lysine + ATP = lysidine(34) in tRNA(Ile2) + AMP + diphosphate + H(+). In terms of biological role, ligates lysine onto the cytidine present at position 34 of the AUA codon-specific tRNA(Ile) that contains the anticodon CAU, in an ATP-dependent manner. Cytidine is converted to lysidine, thus changing the amino acid specificity of the tRNA from methionine to isoleucine. The sequence is that of tRNA(Ile)-lysidine synthase from Thermosynechococcus vestitus (strain NIES-2133 / IAM M-273 / BP-1).